The chain runs to 303 residues: MESALPSIFTLVIIAEFIIGNLSNGFIVLINCIDWVSKRELSSVDKLLIILAISRIGLIWEILVSWFLALHSLAIFVSGTGLRIMIFSWIVSNHFNLWLATILSIFYLLKIASFSSPAFLYLKRRVNKVILMILLGTLVFLFLNLIQINMLIKDWLDRYERNTTWNFSMSDFETFSVSVRFTMTMFSLTPFTVAFISFLLLVFSLQKHLQKMQLNYKGHRDPRTKVHTNALKIVISFLLLYASFFLSILISWISELYQNTVIYMLCETIGAFYPSSHSFLLILGNAKLRQAFLLVAAKVWAKR.

The Extracellular portion of the chain corresponds to 1–7 (MESALPS). Residues 8-28 (IFTLVIIAEFIIGNLSNGFIV) traverse the membrane as a helical segment. The Cytoplasmic segment spans residues 29-55 (LINCIDWVSKRELSSVDKLLIILAISR). Residues 56–76 (IGLIWEILVSWFLALHSLAIF) form a helical membrane-spanning segment. At 77 to 85 (VSGTGLRIM) the chain is on the extracellular side. A helical transmembrane segment spans residues 86-106 (IFSWIVSNHFNLWLATILSIF). Residues 107–128 (YLLKIASFSSPAFLYLKRRVNK) are Cytoplasmic-facing. A helical membrane pass occupies residues 129–149 (VILMILLGTLVFLFLNLIQIN). At 150–184 (MLIKDWLDRYERNTTWNFSMSDFETFSVSVRFTMT) the chain is on the extracellular side. Asn162 and Asn166 each carry an N-linked (GlcNAc...) asparagine glycan. The chain crosses the membrane as a helical span at residues 185–205 (MFSLTPFTVAFISFLLLVFSL). Residues 206–232 (QKHLQKMQLNYKGHRDPRTKVHTNALK) lie on the Cytoplasmic side of the membrane. A helical transmembrane segment spans residues 233–253 (IVISFLLLYASFFLSILISWI). Residues 254–261 (SELYQNTV) are Extracellular-facing. The chain crosses the membrane as a helical span at residues 262–282 (IYMLCETIGAFYPSSHSFLLI). At 283–303 (LGNAKLRQAFLLVAAKVWAKR) the chain is on the cytoplasmic side.

Belongs to the G-protein coupled receptor T2R family.

The protein resides in the membrane. In terms of biological role, receptor that may play a role in the perception of bitterness and is gustducin-linked. May play a role in sensing the chemical composition of the gastrointestinal content. The activity of this receptor may stimulate alpha gustducin, mediate PLC-beta-2 activation and lead to the gating of TRPM5. The chain is Taste receptor type 2 member 13 (TAS2R13) from Pan troglodytes (Chimpanzee).